The primary structure comprises 108 residues: Ig kappa chain V-VI region NQ2-6.1 (108 aa).

A framework-1 region spans residues 1-23 (QILLTQSPAIMSASPGQKVTMTC). Residues cysteine 23 and cysteine 87 are joined by a disulfide bond. The complementarity-determining-1 stretch occupies residues 24–33 (SASSSVSYMY). The interval 34–48 (WYQQKPGSSPRLLIY) is framework-2. A complementarity-determining-2 region spans residues 49–55 (DTSNLAS). A framework-3 region spans residues 56-87 (GVPVRFSGSGSATSYSLTITRMQAEDAATYYC). The interval 88–98 (QQWSSYPPMLT) is complementarity-determining-3. The segment at 99–108 (FGAGTKLELK) is framework-4.

This Mus musculus (Mouse) protein is Ig kappa chain V-VI region NQ2-6.1.